A 386-amino-acid polypeptide reads, in one-letter code: 2,3,4,5-tetrahydropyridine-2,6-dicarboxylate N-succinyltransferase (386 aa).

Glu-257 functions as the Acyl-anhydride intermediate in the catalytic mechanism. Succinyl-CoA-binding positions include Arg-259, Gly-274, Ser-277, Ala-300, 315–316, Gly-323, Lys-349, and 362–365; these read DA and RQDS.

It belongs to the type 2 tetrahydrodipicolinate N-succinyltransferase family. Homotrimer.

Its subcellular location is the cytoplasm. It catalyses the reaction (S)-2,3,4,5-tetrahydrodipicolinate + succinyl-CoA + H2O = (S)-2-succinylamino-6-oxoheptanedioate + CoA. The protein operates within amino-acid biosynthesis; L-lysine biosynthesis via DAP pathway; LL-2,6-diaminopimelate from (S)-tetrahydrodipicolinate (succinylase route): step 1/3. Catalyzes the conversion of the cyclic tetrahydrodipicolinate (THDP) into the acyclic N-succinyl-L-2-amino-6-oxopimelate using succinyl-CoA. The polypeptide is 2,3,4,5-tetrahydropyridine-2,6-dicarboxylate N-succinyltransferase (Campylobacter jejuni subsp. jejuni serotype O:2 (strain ATCC 700819 / NCTC 11168)).